The following is a 153-amino-acid chain: Ribosome maturation factor RimP (153 aa).

Belongs to the RimP family.

The protein resides in the cytoplasm. Its function is as follows. Required for maturation of 30S ribosomal subunits. The protein is Ribosome maturation factor RimP of Psychromonas ingrahamii (strain DSM 17664 / CCUG 51855 / 37).